The primary structure comprises 148 residues: Probable histone H2A.1 (148 aa).

Residues 1 to 23 (MDASTKTKKGAGGRKGGPRKKSV) are compositionally biased toward basic residues. Disordered stretches follow at residues 1-28 (MDAS…RSTR) and 127-148 (KNEK…PKKA). The span at 131–142 (AATTTKSPSKAT) shows a compositional bias: low complexity. 2 consecutive short sequence motifs (SPKK motif) follow at residues 137–140 (SPSK) and 144–147 (SPKK).

It belongs to the histone H2A family. In terms of assembly, the nucleosome is a histone octamer containing two molecules each of H2A, H2B, H3 and H4 assembled in one H3-H4 heterotetramer and two H2A-H2B heterodimers. The octamer wraps approximately 147 bp of DNA.

It is found in the nucleus. The protein resides in the chromosome. Functionally, core component of nucleosome. Nucleosomes wrap and compact DNA into chromatin, limiting DNA accessibility to the cellular machineries which require DNA as a template. Histones thereby play a central role in transcription regulation, DNA repair, DNA replication and chromosomal stability. DNA accessibility is regulated via a complex set of post-translational modifications of histones, also called histone code, and nucleosome remodeling. The protein is Probable histone H2A.1 of Medicago truncatula (Barrel medic).